A 217-amino-acid chain; its full sequence is Probable transaldolase (217 aa).

Lys-85 acts as the Schiff-base intermediate with substrate in catalysis.

The protein belongs to the transaldolase family. Type 3B subfamily.

It localises to the cytoplasm. The catalysed reaction is D-sedoheptulose 7-phosphate + D-glyceraldehyde 3-phosphate = D-erythrose 4-phosphate + beta-D-fructose 6-phosphate. It functions in the pathway carbohydrate degradation; pentose phosphate pathway; D-glyceraldehyde 3-phosphate and beta-D-fructose 6-phosphate from D-ribose 5-phosphate and D-xylulose 5-phosphate (non-oxidative stage): step 2/3. Its function is as follows. Transaldolase is important for the balance of metabolites in the pentose-phosphate pathway. In Agathobacter rectalis (strain ATCC 33656 / DSM 3377 / JCM 17463 / KCTC 5835 / VPI 0990) (Eubacterium rectale), this protein is Probable transaldolase.